The primary structure comprises 279 residues: Ribosome maturation factor RimP (279 aa).

Positions 197–279 (LAEEGEPEEQ…GAPALRPTPK (83 aa)) are disordered. Positions 199–210 (EEGEPEEQEEGG) are enriched in acidic residues.

The protein belongs to the RimP family.

It localises to the cytoplasm. Its function is as follows. Required for maturation of 30S ribosomal subunits. The protein is Ribosome maturation factor RimP of Methylocella silvestris (strain DSM 15510 / CIP 108128 / LMG 27833 / NCIMB 13906 / BL2).